A 330-amino-acid chain; its full sequence is Ketol-acid reductoisomerase (NADP(+)) (330 aa).

Residues 1 to 181 (MKVFYDSDFK…GLSRAGVIQT (181 aa)) form the KARI N-terminal Rossmann domain. Residues 24 to 27 (YGSQ), R47, S52, and 82 to 85 (DELQ) each bind NADP(+). Residue H107 is part of the active site. Residue G133 coordinates NADP(+). Residues 182–327 (TFKEETETDL…AKLRKMCGLE (146 aa)) enclose the KARI C-terminal knotted domain. Positions 190, 194, 226, and 230 each coordinate Mg(2+). A substrate-binding site is contributed by S251.

Belongs to the ketol-acid reductoisomerase family. Mg(2+) is required as a cofactor.

It carries out the reaction (2R)-2,3-dihydroxy-3-methylbutanoate + NADP(+) = (2S)-2-acetolactate + NADPH + H(+). The enzyme catalyses (2R,3R)-2,3-dihydroxy-3-methylpentanoate + NADP(+) = (S)-2-ethyl-2-hydroxy-3-oxobutanoate + NADPH + H(+). Its pathway is amino-acid biosynthesis; L-isoleucine biosynthesis; L-isoleucine from 2-oxobutanoate: step 2/4. It participates in amino-acid biosynthesis; L-valine biosynthesis; L-valine from pyruvate: step 2/4. Its function is as follows. Involved in the biosynthesis of branched-chain amino acids (BCAA). Catalyzes an alkyl-migration followed by a ketol-acid reduction of (S)-2-acetolactate (S2AL) to yield (R)-2,3-dihydroxy-isovalerate. In the isomerase reaction, S2AL is rearranged via a Mg-dependent methyl migration to produce 3-hydroxy-3-methyl-2-ketobutyrate (HMKB). In the reductase reaction, this 2-ketoacid undergoes a metal-dependent reduction by NADPH to yield (R)-2,3-dihydroxy-isovalerate. The sequence is that of Ketol-acid reductoisomerase (NADP(+)) from Methanococcus maripaludis (strain C5 / ATCC BAA-1333).